The primary structure comprises 1185 residues: Ubiquitin carboxyl-terminal hydrolase 36 (1185 aa).

Positions 126–169 (TGKALSSNGHDNTNGVNGSSAATVNGNRKQTVEQSNQNSTTNPN) are enriched in polar residues. The interval 126–174 (TGKALSSNGHDNTNGVNGSSAATVNGNRKQTVEQSNQNSTTNPNELPKP) is disordered. The USP domain maps to 199-509 (AGMLNVGNTC…NAYIMFYELD (311 aa)). The active-site Nucleophile is the Cys208. The active-site Proton acceptor is His468. Ser552 and Ser554 each carry phosphoserine. Residues 642–658 (ANSNKSSCNNNTLTTNS) show a composition bias toward low complexity. Disordered regions lie at residues 642 to 804 (ANSN…TDAI), 818 to 975 (HRAT…YQSE), 1056 to 1122 (APTL…GSFP), and 1136 to 1185 (NKFK…QQQS). Residues 670-683 (SDEEDEDEDSDDDV) are compositionally biased toward acidic residues. Residue Thr716 is modified to Phosphothreonine. Phosphoserine is present on residues Ser726 and Ser728. 2 stretches are compositionally biased toward low complexity: residues 778-797 (KSNG…SNNN) and 836-853 (QQQQ…SLIS). Ser867 carries the phosphoserine modification. The residue at position 870 (Thr870) is a Phosphothreonine. The residue at position 873 (Ser873) is a Phosphoserine. The segment covering 891-920 (DDNDDDDEDADEEDDADADAEQEEYDDEVV) has biased composition (acidic residues). 2 stretches are compositionally biased toward polar residues: residues 924–942 (TTPS…SKPS) and 959–975 (SAKS…YQSE). At Thr925 the chain carries Phosphothreonine. A compositionally biased stretch (basic and acidic residues) spans 1062 to 1071 (EAREQRKRDA). Composition is skewed to low complexity over residues 1151–1161 (QQQRALQRHLA) and 1172–1185 (QSTG…QQQS).

Belongs to the peptidase C19 family. As to quaternary structure, interacts with atms/PAF1, but not with CycT.

The protein resides in the nucleus. It is found in the nucleolus. The enzyme catalyses Thiol-dependent hydrolysis of ester, thioester, amide, peptide and isopeptide bonds formed by the C-terminal Gly of ubiquitin (a 76-residue protein attached to proteins as an intracellular targeting signal).. Functionally, required for maintaining multiple types of adult stem cells, including male and female germline, epithelial follicle cell and intestinal stem cells. May function as a transcriptional repressor by continually deubiquiting histone H2B at the promoters of genes critical for cellular differentiation, thereby preventing histone H3 'Lys-4' trimethylation (H3K4). Controls selective autophagy activation by ubiquitinated proteins. In Drosophila mojavensis (Fruit fly), this protein is Ubiquitin carboxyl-terminal hydrolase 36 (Usp36).